The sequence spans 187 residues: Large ribosomal subunit protein uL5 (187 aa).

It belongs to the universal ribosomal protein uL5 family. Part of the 50S ribosomal subunit; part of the 5S rRNA/L5/L18/L25 subcomplex. Contacts the 5S rRNA and the P site tRNA. Forms a bridge to the 30S subunit in the 70S ribosome.

Functionally, this is one of the proteins that bind and probably mediate the attachment of the 5S RNA into the large ribosomal subunit, where it forms part of the central protuberance. In the 70S ribosome it contacts protein S13 of the 30S subunit (bridge B1b), connecting the 2 subunits; this bridge is implicated in subunit movement. Contacts the P site tRNA; the 5S rRNA and some of its associated proteins might help stabilize positioning of ribosome-bound tRNAs. In Saccharopolyspora erythraea (strain ATCC 11635 / DSM 40517 / JCM 4748 / NBRC 13426 / NCIMB 8594 / NRRL 2338), this protein is Large ribosomal subunit protein uL5.